The sequence spans 265 residues: Mlc titration factor A (265 aa).

Positions 111, 148, 152, and 211 each coordinate Zn(2+).

This sequence belongs to the MtfA family. Interacts with Mlc. Zn(2+) serves as cofactor.

Its subcellular location is the cytoplasm. Involved in the modulation of the activity of the glucose-phosphotransferase system (glucose-PTS). Interacts with the transcriptional repressor Mlc, preventing its interaction with DNA and leading to the modulation of expression of genes regulated by Mlc, including ptsG, which encodes the PTS system glucose-specific EIICB component. Its function is as follows. Shows zinc-dependent metallopeptidase activity. The chain is Mlc titration factor A from Escherichia coli O7:K1 (strain IAI39 / ExPEC).